Reading from the N-terminus, the 525-residue chain is Golgi resident protein GCP60 (525 aa).

The residue at position 2 (Ala2) is an N-acetylalanine. The segment at 12-68 (VSLDGLTLSPDSEERPGAEGAPPQTPPSSAPGNGLGSGASGQQREPGEAAAEGAAEE) is disordered. Residue Ser13 is modified to Phosphoserine. A Phosphothreonine modification is found at Thr18. Phosphoserine occurs at positions 20 and 40. Residues 52–64 (GQQREPGEAAAEG) show a composition bias toward low complexity. One can recognise an ACB domain in the interval 80-171 (LEELYGLALR…LNKCCPLLSA (92 aa)). A coiled-coil region spans residues 169 to 254 (LSAYVASHRI…AALNSQTAVQ (86 aa)). The tract at residues 180–226 (KEEEEKRRKAEEERRQREEEERERLQKEEEKRKREKEDRLRREEEER) is disordered. A q domain; Interaction with PI4KB, TBC1D22A and TBC1D22B region spans residues 238-305 (QQKQQIMAAL…QQQAALQKQQ (68 aa)). Over residues 319–336 (KVNTAGASDTLSVNGQAK) the composition is skewed to polar residues. Positions 319–346 (KVNTAGASDTLSVNGQAKTHTENSEKVL) are disordered. Residues 337–346 (THTENSEKVL) show a composition bias toward basic and acidic residues. The GOLD domain occupies 381 to 523 (KEKIRQDADS…SKSVYYRVYY (143 aa)). Positions 448–470 (SDEEEEEEENVTCEEKAKKNANK) form a coiled coil.

In terms of assembly, homodimer. Interacts with the C-terminal cytoplasmic domain of giantin/GOLGB1. Interacts with PBR and PKA regulatory subunit RI-alpha. Does not interact with PKA regulatory subunit RI-beta nor PKA regulatory subunit RII-alpha. Interacts (via Q domain) with PI4KB (via N-terminus). Interacts (via Q domain) with TBC1D22A and TBC1D22B; interactions with PI4KB and with TBC1D22A and TBC1D22B are mutually exclusive. Interacts with C10ORF76 and RAB11B. Expressed in brain (hippocampus, olfactory bulb, neuronal and glial cells of the cortex), eye, submaxillary gland, testis (interstitial and tubular compartments), ovary (granulosa cells, theca cells at late stages and primary follicles), adrenal gland (fasciculata and glomerulosa cells), heart, liver, and steroidogenic cell lines.

Its subcellular location is the golgi apparatus membrane. It is found in the mitochondrion. In terms of biological role, involved in the maintenance of Golgi structure by interacting with giantin, affecting protein transport between the endoplasmic reticulum and Golgi. Involved in hormone-induced steroid biosynthesis in testicular Leydig cells. Recruits PI4KB to the Golgi apparatus membrane; enhances the enzyme activity of PI4KB activity via its membrane recruitment thereby increasing the local concentration of the substrate in the vicinity of the kinase. In Mus musculus (Mouse), this protein is Golgi resident protein GCP60 (Acbd3).